Here is a 173-residue protein sequence, read N- to C-terminus: Photosystem I assembly protein Ycf3 (173 aa).

TPR repeat units lie at residues 35-68, 72-105, and 120-153; these read AYLY…EDNQ, GETL…NPKQ, and GRMA…YPGG.

The protein belongs to the Ycf3 family.

The protein resides in the cellular thylakoid membrane. Its function is as follows. Essential for the assembly of the photosystem I (PSI) complex. May act as a chaperone-like factor to guide the assembly of the PSI subunits. This is Photosystem I assembly protein Ycf3 from Prochlorococcus marinus (strain NATL2A).